A 139-amino-acid chain; its full sequence is Putative pre-16S rRNA nuclease (139 aa).

It belongs to the YqgF nuclease family.

Its subcellular location is the cytoplasm. Could be a nuclease involved in processing of the 5'-end of pre-16S rRNA. This is Putative pre-16S rRNA nuclease from Photorhabdus laumondii subsp. laumondii (strain DSM 15139 / CIP 105565 / TT01) (Photorhabdus luminescens subsp. laumondii).